The following is a 215-amino-acid chain: Adenylate kinase (215 aa).

10 to 15 (GAGKGT) contacts ATP. Positions 30 to 59 (STGDMLRAAIKAGTPLGLEAKKIIDEGGLV) are NMP. Residues Thr31, Arg36, 57–59 (GLV), 85–88 (GFPR), and Gln92 each bind AMP. Positions 122–159 (GRRVHLASGRTYHVTYNPPKTEGKDDVTGEDLIQRDDD) are LID. ATP is bound by residues Arg123 and 132 to 133 (TY). AMP contacts are provided by Arg156 and Arg167. Gln200 is an ATP binding site.

It belongs to the adenylate kinase family. As to quaternary structure, monomer.

Its subcellular location is the cytoplasm. It carries out the reaction AMP + ATP = 2 ADP. It functions in the pathway purine metabolism; AMP biosynthesis via salvage pathway; AMP from ADP: step 1/1. Its function is as follows. Catalyzes the reversible transfer of the terminal phosphate group between ATP and AMP. Plays an important role in cellular energy homeostasis and in adenine nucleotide metabolism. In Neisseria gonorrhoeae (strain ATCC 700825 / FA 1090), this protein is Adenylate kinase.